The primary structure comprises 100 residues: NADH-quinone oxidoreductase subunit K (100 aa).

Helical transmembrane passes span 4-24, 28-48, and 60-80; these read LFHG…SLIV, ILFI…ALIV, and IMYI…LALL.

This sequence belongs to the complex I subunit 4L family. NDH-1 is composed of 13 different subunits. Subunits NuoA, H, J, K, L, M, N constitute the membrane sector of the complex.

Its subcellular location is the cell membrane. It carries out the reaction a quinone + NADH + 5 H(+)(in) = a quinol + NAD(+) + 4 H(+)(out). Functionally, NDH-1 shuttles electrons from NADH, via FMN and iron-sulfur (Fe-S) centers, to quinones in the respiratory chain. The immediate electron acceptor for the enzyme in this species is believed to be ubiquinone. Couples the redox reaction to proton translocation (for every two electrons transferred, four hydrogen ions are translocated across the cytoplasmic membrane), and thus conserves the redox energy in a proton gradient. This Buchnera aphidicola subsp. Acyrthosiphon pisum (strain 5A) protein is NADH-quinone oxidoreductase subunit K.